The chain runs to 126 residues: Phosphoribosyl-AMP cyclohydrolase (126 aa).

Asp73 contacts Mg(2+). Cys74 serves as a coordination point for Zn(2+). Residues Asp75 and Asp77 each contribute to the Mg(2+) site. 2 residues coordinate Zn(2+): Cys91 and Cys98.

The protein belongs to the PRA-CH family. In terms of assembly, homodimer. It depends on Mg(2+) as a cofactor. Requires Zn(2+) as cofactor.

It localises to the cytoplasm. The catalysed reaction is 1-(5-phospho-beta-D-ribosyl)-5'-AMP + H2O = 1-(5-phospho-beta-D-ribosyl)-5-[(5-phospho-beta-D-ribosylamino)methylideneamino]imidazole-4-carboxamide. The protein operates within amino-acid biosynthesis; L-histidine biosynthesis; L-histidine from 5-phospho-alpha-D-ribose 1-diphosphate: step 3/9. Its function is as follows. Catalyzes the hydrolysis of the adenine ring of phosphoribosyl-AMP. In Solibacter usitatus (strain Ellin6076), this protein is Phosphoribosyl-AMP cyclohydrolase.